Reading from the N-terminus, the 334-residue chain is Nucleoid-associated protein YPK_2796 (334 aa).

Belongs to the YejK family.

The protein localises to the cytoplasm. Its subcellular location is the nucleoid. This chain is Nucleoid-associated protein YPK_2796, found in Yersinia pseudotuberculosis serotype O:3 (strain YPIII).